Here is a 1099-residue protein sequence, read N- to C-terminus: Protein transport protein Sec24A (1099 aa).

Disordered stretches follow at residues 1–36 (MSQP…GPVQ), 65–139 (KTLN…LPGA), and 279–317 (SQPT…AGLP). 5 stretches are compositionally biased toward polar residues: residues 10 to 20 (GGSSTGLQAQN), 68 to 90 (NPVS…NYQG), 108 to 126 (SLHS…QNPA), 279 to 292 (SQPT…SRSV), and 303 to 317 (YQNT…AGLP). Zn(2+) is bound by residues Cys-437, Cys-440, Cys-458, and Cys-461. Positions 437-461 (CRSCRTYINPFVSFLDQRRWKCNLC) are zinc finger-like. A Gelsolin-like repeat occupies 972–1044 (PQPPILQLSV…TPESARTIAF (73 aa)).

This sequence belongs to the SEC23/SEC24 family. SEC24 subfamily. COPII is composed of at least five proteins: the Sec23/24 complex, the Sec13/31 complex and Sar1. Interacts with TMED2. Interacts (as part of the Sec23/24 complex) with SEC22B; recruits SEC22B into COPII-coated vesicles for its transport from the endoplasmic reticulum to the Golgi. Interacts with STING1; promoting STING1 translocation to COPII vesicles in a STEEP1-dependent manner. Interacts with TMEM39A. Interacts with SACM1L; this interaction is reduced in the absence of TMEM39A. Interacts with kinase FAM20C; transport of FAM20C from the endoplasmic reticulum to the Golgi is likely to be mediated by COPII vesicles.

The protein localises to the cytoplasmic vesicle. Its subcellular location is the COPII-coated vesicle membrane. The protein resides in the endoplasmic reticulum membrane. It is found in the cytoplasm. It localises to the cytosol. Component of the coat protein complex II (COPII) which promotes the formation of transport vesicles from the endoplasmic reticulum (ER). The coat has two main functions, the physical deformation of the endoplasmic reticulum membrane into vesicles and the selection of cargo molecules for their transport to the Golgi complex. Plays a central role in cargo selection within the COPII complex and together with SEC24B may have a different specificity compared to SEC24C and SEC24D. May package preferentially cargos with cytoplasmic DxE or LxxLE motifs and may also recognize conformational epitopes. In Bos taurus (Bovine), this protein is Protein transport protein Sec24A.